We begin with the raw amino-acid sequence, 596 residues long: Chaperone protein DnaK (596 aa).

Thr-180 carries the post-translational modification Phosphothreonine; by autocatalysis.

Belongs to the heat shock protein 70 family.

In terms of biological role, acts as a chaperone. The polypeptide is Chaperone protein DnaK (Thermosipho melanesiensis (strain DSM 12029 / CIP 104789 / BI429)).